Consider the following 362-residue polypeptide: Probable dual-specificity RNA methyltransferase RlmN (362 aa).

The Proton acceptor role is filled by E105. One can recognise a Radical SAM core domain in the interval 111–344 (HEYGNSICVT…VTIRREQGHD (234 aa)). A disulfide bridge connects residues C118 and C349. [4Fe-4S] cluster contacts are provided by C125, C129, and C132. Residues 175–176 (GE), S207, 230–232 (SLH), and N306 contribute to the S-adenosyl-L-methionine site. Catalysis depends on C349, which acts as the S-methylcysteine intermediate.

This sequence belongs to the radical SAM superfamily. RlmN family. The cofactor is [4Fe-4S] cluster.

The protein localises to the cytoplasm. The enzyme catalyses adenosine(2503) in 23S rRNA + 2 reduced [2Fe-2S]-[ferredoxin] + 2 S-adenosyl-L-methionine = 2-methyladenosine(2503) in 23S rRNA + 5'-deoxyadenosine + L-methionine + 2 oxidized [2Fe-2S]-[ferredoxin] + S-adenosyl-L-homocysteine. The catalysed reaction is adenosine(37) in tRNA + 2 reduced [2Fe-2S]-[ferredoxin] + 2 S-adenosyl-L-methionine = 2-methyladenosine(37) in tRNA + 5'-deoxyadenosine + L-methionine + 2 oxidized [2Fe-2S]-[ferredoxin] + S-adenosyl-L-homocysteine. Functionally, specifically methylates position 2 of adenine 2503 in 23S rRNA and position 2 of adenine 37 in tRNAs. This is Probable dual-specificity RNA methyltransferase RlmN from Bacillus mycoides (strain KBAB4) (Bacillus weihenstephanensis).